We begin with the raw amino-acid sequence, 447 residues long: Probable cytosol aminopeptidase (447 aa).

2 residues coordinate Mn(2+): lysine 218 and aspartate 223. Lysine 230 is a catalytic residue. Positions 241, 300, and 302 each coordinate Mn(2+). Residue arginine 304 is part of the active site.

Belongs to the peptidase M17 family. Requires Mn(2+) as cofactor.

It is found in the cytoplasm. The enzyme catalyses Release of an N-terminal amino acid, Xaa-|-Yaa-, in which Xaa is preferably Leu, but may be other amino acids including Pro although not Arg or Lys, and Yaa may be Pro. Amino acid amides and methyl esters are also readily hydrolyzed, but rates on arylamides are exceedingly low.. It carries out the reaction Release of an N-terminal amino acid, preferentially leucine, but not glutamic or aspartic acids.. Presumably involved in the processing and regular turnover of intracellular proteins. Catalyzes the removal of unsubstituted N-terminal amino acids from various peptides. The protein is Probable cytosol aminopeptidase (pepA) of Mycoplasma genitalium (strain ATCC 33530 / DSM 19775 / NCTC 10195 / G37) (Mycoplasmoides genitalium).